A 748-amino-acid chain; its full sequence is MSKTWGILMLSVLSAPSLAETELTHKFCGTSMQTRAWQPLPGLKLGMVDIRANDVELLGTQSAEFTGNVDINTVNMSLSAQTALIDKQRGLLNATGPITYRDKISEVNSTGLNADLNNSAISLLGAQYSLTQQLGKGGAEKLTVDESGLMLMNASFTACPGEVPVWAIEADEINLSREEGWGETYNAVLRILDTPVLYLPYFTFPLDERRKSGLLTPSFSSSDRYGLETITPYYWNIAPNLDATITPRYMSRKGLQLQTEFRYLTQEHEGLVGIEYLNKDDSDPDLGDRYMFHWQQKSYLGENWRANVDITNVSDDNYLTDLDSNYASKTDTQLYRTGSLTHMGDTWRTDITVQNFEVLGDHLESYTALPQISFTQTAPWQYDNFDFSVSGEVSHFTNSSAIIDQATRIHIEPKARFDYKEHAWSFLSEVSILQTNYKQHGDLEGTQYSESVSRTLPKVRLYTQLNFERETSYFIDDGIQTLEPQLQYLYTPNEDQSDIGLFDTAKLQDDFFGLFRDTRFSGVDRIAAANQFTLGATTRLFDKKHQEVFNFSAGQIFYLSDSAKPTEQGLNSDTNYNALFAAQTMVHWHRRWYLSAGIQYDTDGKQIIQSNVTLDYKGDDNELVQLNHRYSDDVSGNAIEQTGLFTSIPVSDEWQFIASYHRDLENNRSIEVLSGLQYESCCWAFQITGHRQIVTDLNQSIGQQQATFDSSIRLNFVLKGLGSKSRYDAKKLLQQGIFGYRRPYFLND.

Residues 1 to 19 (MSKTWGILMLSVLSAPSLA) form the signal peptide.

The protein belongs to the LptD family. In terms of assembly, component of the lipopolysaccharide transport and assembly complex. Interacts with LptE and LptA.

It is found in the cell outer membrane. Functionally, together with LptE, is involved in the assembly of lipopolysaccharide (LPS) at the surface of the outer membrane. In Pseudoalteromonas translucida (strain TAC 125), this protein is LPS-assembly protein LptD.